The following is a 210-amino-acid chain: MPKREYFSLPCPLSTFTMAYYWFKAFHLIGIVVWFAGLFYLVRLFVYHAEADQEPEPAKTILKKQYELMEKRLYNIITTPGMVVTVAMAIGLIFTEPEILKSGWLHIKLTFVALLLLYHFYCGRVMKKLAQGESQWSGQQFRALNEAPTILLVVIVLLAVFKNNLPLDATTWLIVALVIAMAASIQLYAKKRRRDQALLTEQQKAASAQN.

The next 5 membrane-spanning stretches (helical) occupy residues 22 to 42 (WFKAFHLIGIVVWFAGLFYLV), 74 to 94 (YNIITTPGMVVTVAMAIGLIF), 103 to 123 (GWLHIKLTFVALLLLYHFYCG), 141 to 161 (FRALNEAPTILLVVIVLLAVF), and 165 to 185 (LPLDATTWLIVALVIAMAASI). A heme-binding site is contributed by histidine 27. Lysine 108 is a heme binding site.

The protein belongs to the HemJ family. Homodimer. Can also form higher oligomers, most probably tetramers. Interacts with Sll1106, however it is unlikely that Sll1106 is required for PPO function. Requires heme b as cofactor.

Its subcellular location is the cell membrane. It catalyses the reaction protoporphyrinogen IX + 3 A = protoporphyrin IX + 3 AH2. It participates in porphyrin-containing compound metabolism; protoporphyrin-IX biosynthesis; protoporphyrin-IX from protoporphyrinogen-IX: step 1/1. Catalyzes the oxidation of protoporphyrinogen IX to protoporphyrin IX. Is involved in the biosynthesis of tetrapyrrole molecules like heme and chlorophyll. Does not use oxygen or artificial electron acceptors such as menadione or benzoquinone. Is functionally coupled with coproporphyrinogen III oxidase (CPO). Is essential for growth. The chain is Protoporphyrinogen IX oxidase from Synechocystis sp. (strain ATCC 27184 / PCC 6803 / Kazusa).